Here is a 119-residue protein sequence, read N- to C-terminus: Large ribosomal subunit protein bL12 (119 aa).

This sequence belongs to the bacterial ribosomal protein bL12 family. Homodimer. Part of the ribosomal stalk of the 50S ribosomal subunit. Forms a multimeric L10(L12)X complex, where L10 forms an elongated spine to which 2 to 4 L12 dimers bind in a sequential fashion. Binds GTP-bound translation factors.

Its function is as follows. Forms part of the ribosomal stalk which helps the ribosome interact with GTP-bound translation factors. Is thus essential for accurate translation. This Lysinibacillus sphaericus (strain C3-41) protein is Large ribosomal subunit protein bL12.